A 933-amino-acid polypeptide reads, in one-letter code: Clumping factor A (933 aa).

Residues 1–39 form the signal peptide; sequence MNMKKKEKHAIRKKSIGVASVLVGTLIGFGLLSSKEADA. A YSIRK-G/S signaling motif motif is present at residues 9-20; sequence HAIRKKSIGVAS. Disordered regions lie at residues 34–200 and 529–904; these read SKEA…SNKD and FNNG…SEDE. Residues 40–542 are ligand binding A region; it reads SENSVTQSDS…SGSGDGIDKP (503 aa). Positions 47–65 are enriched in low complexity; that stretch reads SDSASNESKSNDSSSVSAA. The segment covering 71–105 has biased composition (polar residues); sequence TNVSDTKTSSNTNNGETSVAQNPAQQETTQSSSTN. The span at 106–132 shows a compositional bias: low complexity; it reads ATTEETPVTGEATTTTTNQANTPATTQ. Residues 133 to 200 are compositionally biased toward polar residues; that stretch reads SSNTNAEELV…PQSTDASNKD (68 aa). The span at 547–565 shows a compositional bias: acidic residues; sequence QPDEPGEIEPIPEDSDSDP. Low complexity predominate over residues 566 to 598; that stretch reads GSDSGSDSNSDSGSDSGSDSTSDSGSDSASDSD. Residues 599–861 show a composition bias toward acidic residues; the sequence is SASDSDSASD…DSDSESDSNS (263 aa). The segment covering 862 to 880 has biased composition (low complexity); the sequence is DSESGSNNNVVPPNSPKNG. Over residues 887-896 the composition is skewed to basic and acidic residues; that stretch reads NEAKDSKEPL. Positions 896–900 match the LPXTG sorting signal motif; the sequence is LPDTG. T899 carries the post-translational modification Pentaglycyl murein peptidoglycan amidated threonine. Positions 900–933 are cleaved as a propeptide — removed by sortase; sequence GSEDEANTSLIWGLLASIGSLLLFRRKKENKDKK.

Belongs to the serine-aspartate repeat-containing protein (SDr) family.

It is found in the secreted. The protein localises to the cell wall. Its function is as follows. Cell surface-associated protein implicated in virulence. Promotes bacterial attachment exclusively to the gamma-chain of human fibrinogen. Induces formation of bacterial clumps, which diminish the ability of group IIA phospholipase A2 to cause bacterial phospholipid hydrolysis and killing. Significantly decreases macrophage phagocytosis possibly thanks to the clumps, clumped bacteria being too large to be phagocytosed. Dominant factor responsible for human platelet aggregation, which may be an important mechanism for initiating infective endocarditis. Enhances spleen cell proliferative response in vitro, contributing significantly to the immunostimulatory activity of S.aureus. The protein is Clumping factor A (clfA) of Staphylococcus aureus (strain Newman).